Reading from the N-terminus, the 616-residue chain is Dihydroxy-acid dehydratase (616 aa).

Residue Asp-81 participates in Mg(2+) binding. Cys-122 serves as a coordination point for [2Fe-2S] cluster. 2 residues coordinate Mg(2+): Asp-123 and Lys-124. Position 124 is an N6-carboxylysine (Lys-124). Cys-195 lines the [2Fe-2S] cluster pocket. Glu-491 serves as a coordination point for Mg(2+). Ser-517 (proton acceptor) is an active-site residue.

It belongs to the IlvD/Edd family. Homodimer. [2Fe-2S] cluster is required as a cofactor. The cofactor is Mg(2+).

The catalysed reaction is (2R)-2,3-dihydroxy-3-methylbutanoate = 3-methyl-2-oxobutanoate + H2O. It catalyses the reaction (2R,3R)-2,3-dihydroxy-3-methylpentanoate = (S)-3-methyl-2-oxopentanoate + H2O. It participates in amino-acid biosynthesis; L-isoleucine biosynthesis; L-isoleucine from 2-oxobutanoate: step 3/4. The protein operates within amino-acid biosynthesis; L-valine biosynthesis; L-valine from pyruvate: step 3/4. In terms of biological role, functions in the biosynthesis of branched-chain amino acids. Catalyzes the dehydration of (2R,3R)-2,3-dihydroxy-3-methylpentanoate (2,3-dihydroxy-3-methylvalerate) into 2-oxo-3-methylpentanoate (2-oxo-3-methylvalerate) and of (2R)-2,3-dihydroxy-3-methylbutanoate (2,3-dihydroxyisovalerate) into 2-oxo-3-methylbutanoate (2-oxoisovalerate), the penultimate precursor to L-isoleucine and L-valine, respectively. The sequence is that of Dihydroxy-acid dehydratase from Azoarcus sp. (strain BH72).